Reading from the N-terminus, the 526-residue chain is WRKY transcription factor 72A (526 aa).

Composition is skewed to basic and acidic residues over residues 40–52 (KERK…DDNS) and 60–76 (LTGD…KADM). Disordered regions lie at residues 40–76 (KERK…KADM) and 170–200 (SSTK…QTWP). Positions 62 to 106 (GDKKDDQLESAKADMEEVMEENQRLKKHLDKIMKDYRNLQMQFHE) form a coiled coil. Low complexity predominate over residues 170 to 185 (SSTKSSPSNLSPENSL). Positions 232–298 (CDTPTMNDGC…YEGTHNHPLP (67 aa)) form a DNA-binding region, WRKY.

This sequence belongs to the WRKY group II-b family. Expressed in roots, trichomes and fruits.

Its subcellular location is the nucleus. Functionally, transcription activator involved in the transcriptional regulation of terpene biosynthesis in glandular trichomes. Binds to the promoter of the linalool synthase TPS5 and promotes TPS5 gene transactivation. In association with WRKY72B, contributes to basal defense against root-knot nematodes (RKNs) and potato aphids, as well as Mi-1-mediated gene-for-gene resistance to these pests. Both WRKY72A and WRKY72B are not required for gene-for-gene resistance mediated by Pto, another tomato R gene. The protein is WRKY transcription factor 72A of Solanum lycopersicum (Tomato).